Consider the following 216-residue polypeptide: Probable GTP-binding protein EngB (216 aa).

The EngB-type G domain occupies 37–214 (GSVEIAFAGR…RAAMIRLLDE (178 aa)). GTP contacts are provided by residues 45–52 (GRSNVGKS), 72–76 (GRTQE), 92–95 (DMPG), 159–162 (TKAD), and 193–195 (TSS). Mg(2+) contacts are provided by serine 52 and threonine 74.

Belongs to the TRAFAC class TrmE-Era-EngA-EngB-Septin-like GTPase superfamily. EngB GTPase family. It depends on Mg(2+) as a cofactor.

In terms of biological role, necessary for normal cell division and for the maintenance of normal septation. The polypeptide is Probable GTP-binding protein EngB (Rhodopseudomonas palustris (strain TIE-1)).